Consider the following 250-residue polypeptide: Probable transcriptional regulatory protein PERMA_0079 (250 aa).

The protein belongs to the TACO1 family.

It localises to the cytoplasm. This Persephonella marina (strain DSM 14350 / EX-H1) protein is Probable transcriptional regulatory protein PERMA_0079.